Here is a 327-residue protein sequence, read N- to C-terminus: Type II methyltransferase M.HhaI (327 aa).

Positions 12-325 (LRFIDLFAGL…YNIGSSLNFK (314 aa)) constitute an SAM-dependent MTase C5-type domain. Residue Cys-81 is part of the active site.

Belongs to the class I-like SAM-binding methyltransferase superfamily. C5-methyltransferase family. In terms of assembly, monomer.

The catalysed reaction is a 2'-deoxycytidine in DNA + S-adenosyl-L-methionine = a 5-methyl-2'-deoxycytidine in DNA + S-adenosyl-L-homocysteine + H(+). Functionally, a methylase, recognizes the double-stranded sequence 5'-GCGC-3', methylates C-2 on both strands, and protects the DNA from cleavage by the HhaI endonuclease. The sequence is that of Type II methyltransferase M.HhaI (hhaIM) from Haemophilus parahaemolyticus.